Consider the following 417-residue polypeptide: D-amino acid dehydrogenase (417 aa).

3 to 17 (VVILGSGVVGVSTAW) serves as a coordination point for FAD.

It belongs to the DadA oxidoreductase family. Requires FAD as cofactor.

It carries out the reaction a D-alpha-amino acid + A + H2O = a 2-oxocarboxylate + AH2 + NH4(+). It functions in the pathway amino-acid degradation; D-alanine degradation; NH(3) and pyruvate from D-alanine: step 1/1. Functionally, oxidative deamination of D-amino acids. In Pectobacterium carotovorum subsp. carotovorum (strain PC1), this protein is D-amino acid dehydrogenase.